Reading from the N-terminus, the 264-residue chain is Thiazole synthase (264 aa).

Lys-106 serves as the catalytic Schiff-base intermediate with DXP. 1-deoxy-D-xylulose 5-phosphate is bound by residues Gly-167, 193-194 (AG), and 215-216 (NT).

Belongs to the ThiG family. Homotetramer. Forms heterodimers with either ThiH or ThiS.

It localises to the cytoplasm. It carries out the reaction [ThiS sulfur-carrier protein]-C-terminal-Gly-aminoethanethioate + 2-iminoacetate + 1-deoxy-D-xylulose 5-phosphate = [ThiS sulfur-carrier protein]-C-terminal Gly-Gly + 2-[(2R,5Z)-2-carboxy-4-methylthiazol-5(2H)-ylidene]ethyl phosphate + 2 H2O + H(+). It participates in cofactor biosynthesis; thiamine diphosphate biosynthesis. Catalyzes the rearrangement of 1-deoxy-D-xylulose 5-phosphate (DXP) to produce the thiazole phosphate moiety of thiamine. Sulfur is provided by the thiocarboxylate moiety of the carrier protein ThiS. In vitro, sulfur can be provided by H(2)S. The protein is Thiazole synthase of Stenotrophomonas maltophilia (strain K279a).